The following is a 147-amino-acid chain: Globin, polymeric component P3 (147 aa).

The 145-residue stretch at 2-146 (HLTADQVAAL…ISDALIAGLE (145 aa)) folds into the Globin domain. His96 is a heme b binding site.

Belongs to the globin family. As to quaternary structure, polymer.

The protein is Globin, polymeric component P3 of Glycera dibranchiata (Bloodworm).